The sequence spans 129 residues: V-type proton ATPase subunit F 2 (129 aa).

This sequence belongs to the V-ATPase F subunit family. As to quaternary structure, V-ATPase is a heteromultimeric enzyme made up of two complexes: the ATP-hydrolytic V1 complex and the proton translocation V0 complex. The V1 complex consists of three catalytic AB heterodimers that form a heterohexamer, three peripheral stalks each consisting of EG heterodimers, one central rotor including subunits D and F, and the regulatory subunits C and H. The proton translocation complex V0 consists of the proton transport subunit a, a ring of proteolipid subunits c9c'', rotary subunit d, subunits e and f, and the accessory subunits VhaAC45 and ATP6AP2.

Functionally, subunit of the V1 complex of vacuolar(H+)-ATPase (V-ATPase), a multisubunit enzyme composed of a peripheral complex (V1) that hydrolyzes ATP and a membrane integral complex (V0) that translocates protons. V-ATPase is responsible for acidifying and maintaining the pH of intracellular compartments and in some cell types, is targeted to the plasma membrane, where it is responsible for acidifying the extracellular environment. The chain is V-type proton ATPase subunit F 2 (Vha14-2) from Drosophila melanogaster (Fruit fly).